Consider the following 446-residue polypeptide: Gamma-glutamyl phosphate reductase (446 aa).

This sequence belongs to the gamma-glutamyl phosphate reductase family.

The protein resides in the cytoplasm. The catalysed reaction is L-glutamate 5-semialdehyde + phosphate + NADP(+) = L-glutamyl 5-phosphate + NADPH + H(+). It participates in amino-acid biosynthesis; L-proline biosynthesis; L-glutamate 5-semialdehyde from L-glutamate: step 2/2. Functionally, catalyzes the NADPH-dependent reduction of L-glutamate 5-phosphate into L-glutamate 5-semialdehyde and phosphate. The product spontaneously undergoes cyclization to form 1-pyrroline-5-carboxylate. The protein is Gamma-glutamyl phosphate reductase of Sulfurihydrogenibium sp. (strain YO3AOP1).